A 177-amino-acid polypeptide reads, in one-letter code: Large ribosomal subunit protein uL6 (177 aa).

This sequence belongs to the universal ribosomal protein uL6 family. In terms of assembly, part of the 50S ribosomal subunit.

Functionally, this protein binds to the 23S rRNA, and is important in its secondary structure. It is located near the subunit interface in the base of the L7/L12 stalk, and near the tRNA binding site of the peptidyltransferase center. This is Large ribosomal subunit protein uL6 from Salmonella dublin (strain CT_02021853).